The sequence spans 119 residues: Protein FATTY ACID EXPORT 6 (119 aa).

3 helical membrane passes run 27–47 (SITS…AGYI), 57–77 (NSTI…LVMG), and 84–104 (GKIM…CFYV).

Belongs to the TMEM14 family.

It localises to the membrane. In terms of biological role, may be involved in free fatty acids export. In Arabidopsis thaliana (Mouse-ear cress), this protein is Protein FATTY ACID EXPORT 6.